A 632-amino-acid chain; its full sequence is Probable electron transfer flavoprotein-ubiquinone oxidoreductase, mitochondrial (632 aa).

Residue Val-93–Ile-107 participates in FAD binding. Residues Cys-575, Cys-601, Cys-604, and Cys-607 each coordinate [4Fe-4S] cluster. The region spanning Lys-592–Pro-621 is the 4Fe-4S ferredoxin-type domain.

Belongs to the ETF-QO/FixC family. Requires [4Fe-4S] cluster as cofactor. The cofactor is FAD.

The protein localises to the mitochondrion inner membrane. It catalyses the reaction a ubiquinone + reduced [electron-transfer flavoprotein] = a ubiquinol + oxidized [electron-transfer flavoprotein] + H(+). Functionally, accepts electrons from ETF and reduces ubiquinone. In Schizosaccharomyces pombe (strain 972 / ATCC 24843) (Fission yeast), this protein is Probable electron transfer flavoprotein-ubiquinone oxidoreductase, mitochondrial.